Here is a 445-residue protein sequence, read N- to C-terminus: Argininosuccinate synthase (445 aa).

ATP is bound by residues 17–25 and Ala43; that span reads AFSGGLDTS. Position 99 (Tyr99) interacts with L-citrulline. ATP is bound by residues Gly129 and Thr131. The L-aspartate site is built by Thr131, Asn135, and Asp136. Residue Asn135 participates in L-citrulline binding. Residue Asp136 participates in ATP binding. L-citrulline is bound by residues Arg139 and Ser192. Asp194 contacts ATP. Positions 201, 203, and 280 each coordinate L-citrulline.

It belongs to the argininosuccinate synthase family. Type 2 subfamily. In terms of assembly, homotetramer.

The protein localises to the cytoplasm. It carries out the reaction L-citrulline + L-aspartate + ATP = 2-(N(omega)-L-arginino)succinate + AMP + diphosphate + H(+). Its pathway is amino-acid biosynthesis; L-arginine biosynthesis; L-arginine from L-ornithine and carbamoyl phosphate: step 2/3. In Bradyrhizobium sp. (strain BTAi1 / ATCC BAA-1182), this protein is Argininosuccinate synthase.